The primary structure comprises 549 residues: Efflux pump patC (549 aa).

Residues M1–L12 show a composition bias toward polar residues. Residues M1–Q40 form a disordered region. A run of 14 helical transmembrane segments spans residues L50–V70, A85–L105, W116–P136, V146–L166, L178–A198, W206–L226, V252–W272, L282–L302, I321–I341, L360–K380, V385–V405, I419–V439, L460–L482, and V526–W546.

Belongs to the major facilitator superfamily. TCR/Tet family.

The protein resides in the vacuole membrane. The protein localises to the cell membrane. In terms of biological role, efflux pump; part of the gene cluster that mediates the biosynthesis of patulin, an acetate-derived tetraketide mycotoxin produced by several fungal species that shows antimicrobial properties against several bacteria. May be involved in the secretion of E-ascladiol to be converted to patulin by the secreted patulin synthase patE. The protein is Efflux pump patC of Aspergillus clavatus (strain ATCC 1007 / CBS 513.65 / DSM 816 / NCTC 3887 / NRRL 1 / QM 1276 / 107).